The following is a 268-amino-acid chain: Glycine/sarcosine N-methyltransferase (268 aa).

Residues Y26, W34, R43, A67, D88, 114-115 (DW), and L132 contribute to the S-adenosyl-L-methionine site. 3 residues coordinate substrate: N134, R167, and Y206.

The protein belongs to the class I-like SAM-binding methyltransferase superfamily. Glycine N-methyltransferase family. As to quaternary structure, monomer.

It catalyses the reaction glycine + 2 S-adenosyl-L-methionine = N,N-dimethylglycine + 2 S-adenosyl-L-homocysteine + 2 H(+). The enzyme catalyses glycine + S-adenosyl-L-methionine = sarcosine + S-adenosyl-L-homocysteine + H(+). The catalysed reaction is sarcosine + S-adenosyl-L-methionine = N,N-dimethylglycine + S-adenosyl-L-homocysteine + H(+). It participates in amine and polyamine biosynthesis; betaine biosynthesis via glycine pathway; betaine from glycine: step 1/3. It functions in the pathway amine and polyamine biosynthesis; betaine biosynthesis via glycine pathway; betaine from glycine: step 2/3. With respect to regulation, p-chloromercuribenzoic acid inhibits more than 95% of the GSMT activities on glycine and sarcosine, and S-adenosylhomocysteine (AdoHcy) inhibits completely GSMT activities. Catalyzes the methylation of glycine and sarcosine to sarcosine and dimethylglycine, respectively, with S-adenosylmethionine (AdoMet) acting as the methyl donor. It has strict specificity for glycine and sarcosine as the methyl group acceptors. This Halorhodospira halochloris (Ectothiorhodospira halochloris) protein is Glycine/sarcosine N-methyltransferase.